Here is a 414-residue protein sequence, read N- to C-terminus: uncharacterized protein (414 aa).

The helical transmembrane segment at 367-384 (TTWALTLICIACILLFFV) threads the bilayer.

The protein resides in the virion membrane. This is an uncharacterized protein from Human cytomegalovirus (strain Merlin) (HHV-5).